The following is a 114-amino-acid chain: Large ribosomal subunit protein bL19 (114 aa).

The protein belongs to the bacterial ribosomal protein bL19 family.

Functionally, this protein is located at the 30S-50S ribosomal subunit interface and may play a role in the structure and function of the aminoacyl-tRNA binding site. This Desulfatibacillum aliphaticivorans protein is Large ribosomal subunit protein bL19.